The sequence spans 130 residues: Methylglyoxal synthase (130 aa).

In terms of domain architecture, MGS-like spans 1–130 (MMTRPRIALI…AELSRVEAQP (130 aa)). Substrate contacts are provided by residues H12, K16, 38–41 (TGTT), and 58–59 (SG). D64 acts as the Proton donor/acceptor in catalysis. Position 91 (H91) interacts with substrate.

The protein belongs to the methylglyoxal synthase family.

It catalyses the reaction dihydroxyacetone phosphate = methylglyoxal + phosphate. Its function is as follows. Catalyzes the formation of methylglyoxal from dihydroxyacetone phosphate. This chain is Methylglyoxal synthase, found in Cupriavidus pinatubonensis (strain JMP 134 / LMG 1197) (Cupriavidus necator (strain JMP 134)).